The primary structure comprises 220 residues: Probable GTP-binding protein EngB (220 aa).

An EngB-type G domain is found at 24–207 (PQPEVAFAGR…HELIESWIAP (184 aa)). Residues 32–39 (GRSNAGKS), 59–63 (GRTQH), 81–84 (DLPG), 148–151 (TKCD), and 185–188 (LFSA) each bind GTP. Positions 39 and 61 each coordinate Mg(2+).

This sequence belongs to the TRAFAC class TrmE-Era-EngA-EngB-Septin-like GTPase superfamily. EngB GTPase family. Requires Mg(2+) as cofactor.

In terms of biological role, necessary for normal cell division and for the maintenance of normal septation. The chain is Probable GTP-binding protein EngB from Paraburkholderia phymatum (strain DSM 17167 / CIP 108236 / LMG 21445 / STM815) (Burkholderia phymatum).